A 108-amino-acid chain; its full sequence is Protein FMC1 homolog (108 aa).

The protein belongs to the FMC1 family.

The protein is Protein FMC1 homolog of Caenorhabditis elegans.